A 164-amino-acid polypeptide reads, in one-letter code: Large ribosomal subunit protein uL15 (164 aa).

Positions Met1–Gly52 are disordered. Gly residues predominate over residues Arg21–Gly37.

This sequence belongs to the universal ribosomal protein uL15 family. Part of the 50S ribosomal subunit.

Its function is as follows. Binds to the 23S rRNA. This chain is Large ribosomal subunit protein uL15, found in Anaeromyxobacter sp. (strain Fw109-5).